The following is a 304-amino-acid chain: Cell surface-binding protein OPG105 (304 aa).

Positions Met1–Gly235 constitute an Alpha-carbonic anhydrase domain. Topologically, residues Met1–Thr275 are virion surface. A helical membrane pass occupies residues Phe276 to Met294. The Intravirion portion of the chain corresponds to Ser295–Asn304.

The protein belongs to the alpha-carbonic anhydrase family. In terms of assembly, homodimer; disulfide-linked. Post-translationally, apparently non-glycosylated.

The protein localises to the virion membrane. Functionally, binds to chondroitin sulfate on the cell surface to provide virion attachment to target cell. This Homo sapiens (Human) protein is Cell surface-binding protein OPG105 (OPG105).